Consider the following 407-residue polypeptide: tRNA-specific 2-thiouridylase MnmA (407 aa).

ATP contacts are provided by residues 20 to 27 and Leu46; that span reads AMSGGVDS. The active-site Nucleophile is the Cys114. Cys114 and Cys210 are joined by a disulfide. Residue Gly138 coordinates ATP. The interval 160–162 is interaction with tRNA; sequence RDQ. The active-site Cysteine persulfide intermediate is Cys210.

This sequence belongs to the MnmA/TRMU family.

Its subcellular location is the cytoplasm. The catalysed reaction is S-sulfanyl-L-cysteinyl-[protein] + uridine(34) in tRNA + AH2 + ATP = 2-thiouridine(34) in tRNA + L-cysteinyl-[protein] + A + AMP + diphosphate + H(+). Functionally, catalyzes the 2-thiolation of uridine at the wobble position (U34) of tRNA, leading to the formation of s(2)U34. This chain is tRNA-specific 2-thiouridylase MnmA, found in Bartonella tribocorum (strain CIP 105476 / IBS 506).